Consider the following 238-residue polypeptide: Transcriptional activator HAC1 (238 aa).

Residues 1–39 (MEMTDFELTSNSQSNLAIPTNFKSTLPPRKRAKTKEEKE) form a disordered region. A compositionally biased stretch (polar residues) spans 7–24 (ELTSNSQSNLAIPTNFKS). One can recognise a bZIP domain in the interval 39–102 (EQRRIERILR…LTCSHDAFVA (64 aa)). Residues 41–61 (RRIERILRNRRAAHQSREKKR) form a basic motif region. Residues 67–74 (LERKCSLL) are leucine-zipper. The tract at residues 115 to 152 (GASLDTRASSHSSSDTFTPSPLNCTMEPATLSPKSMRD) is disordered. Residues 117–134 (SLDTRASSHSSSDTFTPS) are compositionally biased toward low complexity.

Belongs to the bZIP family. In terms of assembly, homodimer.

Its subcellular location is the nucleus. Functionally, transcriptional activator involved in the unfolded protein response (UPR) pathway. Recognizes and binds to the UPR element (UPRE) in the promoter of UPR-regulated genes such as KAR2, PDI1, EUG1 and FKB2. Increases the synthesis of endoplasmic reticulum-resident proteins required for protein folding as well as components of the secretory pathway. This chain is Transcriptional activator HAC1 (HAC1), found in Saccharomyces cerevisiae (strain ATCC 204508 / S288c) (Baker's yeast).